We begin with the raw amino-acid sequence, 95 residues long: Large ribosomal subunit protein bL28 (95 aa).

Residues 1-28 (MARKRTLGGKAPQAGNKVSHSQRKTRRQ) are disordered.

Belongs to the bacterial ribosomal protein bL28 family.

The protein is Large ribosomal subunit protein bL28 of Magnetococcus marinus (strain ATCC BAA-1437 / JCM 17883 / MC-1).